Consider the following 863-residue polypeptide: MLFSPTLSSLLTPSAVKIERENLKQFELENFSCYSIFELIENRCDFYDALLIQLWQEIGLSEQQGISLIAVGGYGRREMFPLSDLDFLILVEQTPSHEIEEKITQFIQFLWDCGFEVGNSVRTLEQCELEGKQDITIATNLLEARFLTGNRPHFDVLNELVKRADFWSKEDFFNAKVQEQIERYQRYHNTAYNLEPDIKFSPGGLRDLHLLYWVALRHSGALTLEAILQSGFIYPQEYQQLQESRAFLFKVRFALHLILKRYDNRLLFDRQIKVSELLGFRGEGNPAVEKMMKCFFQALHRISLISNLLIQHYRENVLSSNQDTVIDQLDDDFQLINQSLCLRNSFVFQEKPARILDLFFYLTQYEHVNIHSDTLRQLQISLEQLSQKLCEIPAAREKFLRLFNQSNAIKRAFMPMHQYGVLTAYLPQWQAIEGLMQFDLFHIYTVDEHTLRVMLKLESFLPKGSAQEHPIAHRIFSQLSDRTLLYIAALFHDIAKGRGGDHAELGAEDVADFAQLHGLDRREIDTLAWLVQSHLLMSITAQRRDIHDPEVVMNFAEAMQNQVRLDYLTCLTVADICATNGNLWNSWKRSLFASLYEFTEQQFSQGMKELLDYSEKSAENRKLAQQILTQDYSDITSISIEKLWTRCPEDYFVRNTPKQIAWHTSLLVDFVEALLVKISNRFSLGGTEVFIYCQDQPHLFNKVVSTIGAKKFSIHDAQIITTQDGYVFDSFIITELNGELVEFDRRRELEQALTVALQSEKLPALSIVPNRQLQHFTVQTDVRFLQENKKEHTEMELVALDKAGLLAQVSQIFTELNLNLLNAKITTVGEKAEDFFILTNQFGQALAREERERLNSVIIQQIR.

The tract at residues 1-328 is uridylyltransferase; sequence MLFSPTLSSL…SSNQDTVIDQ (328 aa). The tract at residues 329 to 687 is uridylyl-removing; that stretch reads LDDDFQLINQ…ISNRFSLGGT (359 aa). An HD domain is found at 446 to 568; it reads VDEHTLRVML…MQNQVRLDYL (123 aa). ACT domains lie at 688–764 and 794–863; these read EVFI…KLPA and EMEL…QQIR.

This sequence belongs to the GlnD family. The cofactor is Mg(2+).

The enzyme catalyses [protein-PII]-L-tyrosine + UTP = [protein-PII]-uridylyl-L-tyrosine + diphosphate. The catalysed reaction is [protein-PII]-uridylyl-L-tyrosine + H2O = [protein-PII]-L-tyrosine + UMP + H(+). Its activity is regulated as follows. Uridylyltransferase (UTase) activity is inhibited by glutamine, while glutamine activates uridylyl-removing (UR) activity. Modifies, by uridylylation and deuridylylation, the PII regulatory proteins (GlnB and homologs), in response to the nitrogen status of the cell that GlnD senses through the glutamine level. Under low glutamine levels, catalyzes the conversion of the PII proteins and UTP to PII-UMP and PPi, while under higher glutamine levels, GlnD hydrolyzes PII-UMP to PII and UMP (deuridylylation). Thus, controls uridylylation state and activity of the PII proteins, and plays an important role in the regulation of nitrogen assimilation and metabolism. The chain is Bifunctional uridylyltransferase/uridylyl-removing enzyme from Haemophilus influenzae (strain ATCC 51907 / DSM 11121 / KW20 / Rd).